Consider the following 359-residue polypeptide: 4-hydroxy-3-methylbut-2-en-1-yl diphosphate synthase (flavodoxin) (359 aa).

Residues cysteine 264, cysteine 267, cysteine 299, and glutamate 306 each contribute to the [4Fe-4S] cluster site.

Belongs to the IspG family. The cofactor is [4Fe-4S] cluster.

The catalysed reaction is (2E)-4-hydroxy-3-methylbut-2-enyl diphosphate + oxidized [flavodoxin] + H2O + 2 H(+) = 2-C-methyl-D-erythritol 2,4-cyclic diphosphate + reduced [flavodoxin]. It functions in the pathway isoprenoid biosynthesis; isopentenyl diphosphate biosynthesis via DXP pathway; isopentenyl diphosphate from 1-deoxy-D-xylulose 5-phosphate: step 5/6. Converts 2C-methyl-D-erythritol 2,4-cyclodiphosphate (ME-2,4cPP) into 1-hydroxy-2-methyl-2-(E)-butenyl 4-diphosphate. In Helicobacter pylori (strain G27), this protein is 4-hydroxy-3-methylbut-2-en-1-yl diphosphate synthase (flavodoxin).